Consider the following 240-residue polypeptide: UDP-2,3-diacylglucosamine hydrolase (240 aa).

Residues Asp-8, His-10, Asp-41, Asn-79, and His-114 each contribute to the Mn(2+) site. Residue Asn-79–Arg-80 coordinates substrate. Residues Asp-122, Ser-160, Asn-164, Lys-167, and His-195 each contribute to the substrate site. The Mn(2+) site is built by His-195 and His-197.

The protein belongs to the LpxH family. Mn(2+) serves as cofactor.

Its subcellular location is the cell inner membrane. The catalysed reaction is UDP-2-N,3-O-bis[(3R)-3-hydroxytetradecanoyl]-alpha-D-glucosamine + H2O = 2-N,3-O-bis[(3R)-3-hydroxytetradecanoyl]-alpha-D-glucosaminyl 1-phosphate + UMP + 2 H(+). Its pathway is glycolipid biosynthesis; lipid IV(A) biosynthesis; lipid IV(A) from (3R)-3-hydroxytetradecanoyl-[acyl-carrier-protein] and UDP-N-acetyl-alpha-D-glucosamine: step 4/6. Its function is as follows. Hydrolyzes the pyrophosphate bond of UDP-2,3-diacylglucosamine to yield 2,3-diacylglucosamine 1-phosphate (lipid X) and UMP by catalyzing the attack of water at the alpha-P atom. Involved in the biosynthesis of lipid A, a phosphorylated glycolipid that anchors the lipopolysaccharide to the outer membrane of the cell. The polypeptide is UDP-2,3-diacylglucosamine hydrolase (Salmonella arizonae (strain ATCC BAA-731 / CDC346-86 / RSK2980)).